We begin with the raw amino-acid sequence, 58 residues long: MGVPKRRVSKARKNKRRSQWKIAAPKLVSCPHCHQLMIPHRVCKNCGYYDGRQVVNME.

Belongs to the bacterial ribosomal protein bL32 family.

The chain is Large ribosomal subunit protein bL32 from Carboxydothermus hydrogenoformans (strain ATCC BAA-161 / DSM 6008 / Z-2901).